The primary structure comprises 223 residues: Ribonuclease T (223 aa).

Residues 20–194 (VVIDVETAGF…YDTERTAELF (175 aa)) enclose the Exonuclease domain. The Mg(2+) site is built by aspartate 23, glutamate 25, histidine 181, and aspartate 186. Histidine 181 serves as the catalytic Proton donor/acceptor.

It belongs to the RNase T family. As to quaternary structure, homodimer. It depends on Mg(2+) as a cofactor.

Functionally, trims short 3' overhangs of a variety of RNA species, leaving a one or two nucleotide 3' overhang. Responsible for the end-turnover of tRNA: specifically removes the terminal AMP residue from uncharged tRNA (tRNA-C-C-A). Also appears to be involved in tRNA biosynthesis. The chain is Ribonuclease T from Shewanella sp. (strain W3-18-1).